The sequence spans 129 residues: MSVDTLSNAMIAIKNAEMVGEKKCEIKPASKLIGNVLKVMKDYGYIKGFEYVENHRGGKFIVELSGNINDCGAIRPRFSSSVTEYEMYEKRYLPARDFGILIVSTTKGVMSQKDARKQRLGGVLLAYVY.

It belongs to the universal ribosomal protein uS8 family. As to quaternary structure, part of the 30S ribosomal subunit.

One of the primary rRNA binding proteins, it binds directly to 16S rRNA central domain where it helps coordinate assembly of the platform of the 30S subunit. In Archaeoglobus fulgidus (strain ATCC 49558 / DSM 4304 / JCM 9628 / NBRC 100126 / VC-16), this protein is Small ribosomal subunit protein uS8.